Here is a 464-residue protein sequence, read N- to C-terminus: Agamous-like MADS-box protein AGL92 (464 aa).

Residues 1–60 (MRTKTKLVLIPDRHFRRATFRKRNAGIRKKLHELTTLCDIKACAVIYSPFENPTVWPSTE) form the MADS-box domain. Residues 85-114 (ETFLRDQITKEQNKLESLRRENRETQLKHF) are a coiled coil. The disordered stretch occupies residues 443 to 464 (TSTGHMPSTTTTTTNNNNNNNV). The segment covering 451 to 464 (TTTTTTNNNNNNNV) has biased composition (low complexity).

Interacts with AGL62.

Its subcellular location is the nucleus. Functionally, putative transcription factor. This chain is Agamous-like MADS-box protein AGL92 (AGL92), found in Arabidopsis thaliana (Mouse-ear cress).